Consider the following 306-residue polypeptide: B- and T-lymphocyte attenuator (306 aa).

The first 29 residues, 1-29 (MKTVPAMLGTPRLFREFFILHLGLWSILC), serve as a signal peptide directing secretion. At 30 to 183 (EKATKRNDEE…ERPGRTWLLY (154 aa)) the chain is on the extracellular side. The Ig-like V-type domain maps to 37-139 (DEECPVQLTI…SQVINSHSVT (103 aa)). 3 cysteine pairs are disulfide-bonded: C40/C69, C64/C124, and C78/C85. 6 N-linked (GlcNAc...) asparagine glycosylation sites follow: N74, N81, N101, N119, N148, and N165. A helical transmembrane segment spans residues 184–204 (TLLPLGALLLLLACVCLLCFL). Residues 205 to 306 (KRIQGKEKKP…TEYASICVRS (102 aa)) lie on the Cytoplasmic side of the membrane.

In terms of assembly, interacts with tyrosine phosphatases PTPN6/SHP-1 and PTPN11/SHP-2. Interacts with TNFRSF14/HVEM (via cysteine-rich domain 1). In terms of processing, phosphorylated on Tyr residues by TNFRSF14 and by antigen receptors cross-linking, both inducing association with PTPN6 and PTPN11. Post-translationally, N-glycosylated. As to expression, expressed in splenic T- and B-cells as well as lymph node tissues but very weakly in somatic tissues. Also expressed in macrophages, NK cells and dendritic cells. A polymorphic tissue distribution between several strains is seen.

The protein resides in the cell membrane. Its function is as follows. Inhibitory receptor on lymphocytes that negatively regulates antigen receptor signaling via PTPN6/SHP-1 and PTPN11/SHP-2. May interact in cis (on the same cell) or in trans (on other cells) with TNFRSF14. In cis interactions, appears to play an immune regulatory role inhibiting in trans interactions in naive T cells to maintain a resting state. In trans interactions, can predominate during adaptive immune response to provide survival signals to effector T cells. The polypeptide is B- and T-lymphocyte attenuator (Mus musculus (Mouse)).